An 892-amino-acid chain; its full sequence is Alpha-actinin-1 (892 aa).

The residue at position 1 (M1) is an N-acetylmethionine. An actin-binding region spans residues M1–H247. S6 bears the Phosphoserine mark. A Phosphotyrosine; by FAK1 modification is found at Y12. Calponin-homology (CH) domains follow at residues K31–A135 and T144–S250. N6-acetyllysine occurs at positions 95 and 195. Spectrin repeat units follow at residues Q274 to N384, H394 to R499, Q509 to E620, and R630 to N733. Positions Q274–N733 are interaction with DDN. A Phosphoserine modification is found at S471. K676 carries the post-translational modification N6-acetyllysine. S677 is subject to Phosphoserine. 2 EF-hand domains span residues E746–D781 and Q787–D822. 5 residues coordinate Ca(2+): D759, D761, S763, T765, and E770. At S890 the chain carries Phosphoserine.

Belongs to the alpha-actinin family. Homodimer; antiparallel. Interacts with MYOZ2, TTID and LPP. Interacts with DDN. Interacts with PSD. Interacts with MICALL2. Interacts with DNM2 and CTTN. Interacts with PDLIM1. Interacts with PDLIM2. Interacts with PDLIM4 (via PDZ domain). Interacts with IGSF8.

The protein resides in the cytoplasm. It is found in the cytoskeleton. The protein localises to the myofibril. Its subcellular location is the sarcomere. It localises to the z line. The protein resides in the cell membrane. It is found in the cell junction. The protein localises to the cell projection. Its subcellular location is the ruffle. Its function is as follows. F-actin cross-linking protein which is thought to anchor actin to a variety of intracellular structures. Association with IGSF8 regulates the immune synapse formation and is required for efficient T-cell activation. This Rattus norvegicus (Rat) protein is Alpha-actinin-1 (Actn1).